The sequence spans 315 residues: DNA-directed RNA polymerase subunit alpha (315 aa).

The interval 1 to 228 is alpha N-terminal domain (alpha-NTD); sequence MLEIEKPKIE…EHFKLFMTLT (228 aa). The tract at residues 245 to 315 is alpha C-terminal domain (alpha-CTD); sequence KEKVLEMAIE…LGLSLKQNED (71 aa).

It belongs to the RNA polymerase alpha chain family. In terms of assembly, homodimer. The RNAP catalytic core consists of 2 alpha, 1 beta, 1 beta' and 1 omega subunit. When a sigma factor is associated with the core the holoenzyme is formed, which can initiate transcription.

It catalyses the reaction RNA(n) + a ribonucleoside 5'-triphosphate = RNA(n+1) + diphosphate. Its function is as follows. DNA-dependent RNA polymerase catalyzes the transcription of DNA into RNA using the four ribonucleoside triphosphates as substrates. The sequence is that of DNA-directed RNA polymerase subunit alpha from Clostridium kluyveri (strain NBRC 12016).